A 1468-amino-acid chain; its full sequence is DNA-directed RNA polymerase subunit beta (1468 aa).

This sequence belongs to the RNA polymerase beta chain family. In terms of assembly, the RNAP catalytic core consists of 2 alpha, 1 beta, 1 beta' and 1 omega subunit. When a sigma factor is associated with the core the holoenzyme is formed, which can initiate transcription.

It catalyses the reaction RNA(n) + a ribonucleoside 5'-triphosphate = RNA(n+1) + diphosphate. Its function is as follows. DNA-dependent RNA polymerase catalyzes the transcription of DNA into RNA using the four ribonucleoside triphosphates as substrates. The chain is DNA-directed RNA polymerase subunit beta from Aquifex aeolicus (strain VF5).